The following is a 393-amino-acid chain: Cytotoxic and regulatory T-cell molecule (393 aa).

Residues 1–17 (MWWRVLSLLAWFPLQEA) form the signal peptide. In terms of domain architecture, Ig-like V-type spans 18 to 114 (SLTNHTETIT…VSTKEVKVIV (97 aa)). Residues 18 to 287 (SLTNHTETIT…YLGLARKKSG (270 aa)) lie on the Extracellular side of the membrane. Residues Asn21, Asn87, and Asn178 are each glycosylated (N-linked (GlcNAc...) asparagine). Disulfide bonds link Cys38–Cys98 and Cys141–Cys196. Residues 118 to 210 (PFKPILEASV…RGLQGRKLVA (93 aa)) form the Ig-like C2-type domain. The disordered stretch occupies residues 225–273 (SDALERNSLSSQDPQQPTSTVSVTEDSSTSEIDKEEKEQTTQDPDLTTE). Over residues 231 to 241 (NSLSSQDPQQP) the composition is skewed to polar residues. A compositionally biased stretch (low complexity) spans 242-254 (TSTVSVTEDSSTS). Residues 255–264 (EIDKEEKEQT) show a composition bias toward basic and acidic residues. The helical transmembrane segment at 288-308 (ILLLTLVSFLIFILFIIVQLF) threads the bilayer. Topologically, residues 309 to 393 (IMKLRKAHVI…KHIQVPESIV (85 aa)) are cytoplasmic. 2 stretches are compositionally biased toward basic and acidic residues: residues 328–348 (HTLESYRSRSNNEETSSEEKN) and 374–387 (ENVQHSKLEEKHIQ). Disordered regions lie at residues 328 to 354 (HTLESYRSRSNNEETSSEEKNGQSSHP) and 374 to 393 (ENVQHSKLEEKHIQVPESIV). Positions 390 to 393 (ESIV) match the PDZ-binding motif.

The protein belongs to the nectin family. In terms of assembly, monomer. May form homodimer (via Ig-like V-type domain). Interacts (via Ig-like V-type domain) with CADM1 (via Ig-like V-type domain); the interaction competes with CRTAM homodimerization and CADM1 homodimerization. Interacts (via PDZ-binding motif) with SCRIB (via PDZ domain 3); the interaction promotes CRTAM and SCRIB polarization in a subset of CD4+ T-cells. In terms of tissue distribution, in the immune system, expression is restricted to activated class-I MHC-restricted cells, including NKT and CD8 T-cells. Strongly expressed in spleen, thymus, small intestine, peripheral blood leukocyte, and in Purkinje neurons in cerebellum. Expressed at much lower levels in testis, ovary, colon, lung and lymphoid tissues.

It localises to the cell membrane. Functionally, mediates heterophilic cell-cell adhesion which regulates the activation, differentiation and tissue retention of various T-cell subsets. Interaction with CADM1 promotes natural killer (NK) cell cytotoxicity and IFNG/interferon-gamma secretion by CD8+ T-cells in vitro as well as NK cell-mediated rejection of tumors expressing CADM1 in vivo. Regulates CD8+ T-cell proliferation in response to T-cell receptor (TCR) activation. Appears to be dispensable for CD8+ T-cell-mediated cytotoxicity. Interaction with SCRIB promotes the late phase of cellular polarization of a subset of CD4+ T-cells, which in turn regulates TCR-mediated proliferation and IFNG, IL17 and IL22 production. By interacting with CADM1 on CD8+ dendritic cells, regulates the retention of activated CD8+ T-cells within the draining lymph node. Required for the intestinal retention of intraepithelial CD4+ CD8+ T-cells and, to a lesser extent, intraepithelial and lamina propria CD8+ T-cells and CD4+ T-cells. Interaction with CADM1 promotes the adhesion to gut-associated CD103+ dendritic cells, which may facilitate the expression of gut-homing and adhesion molecules on T-cells and the conversion of CD4+ T-cells into CD4+ CD8+ T-cells. The chain is Cytotoxic and regulatory T-cell molecule from Homo sapiens (Human).